The following is a 221-amino-acid chain: MEDELALSDQGSDEDEEVLTPAELINKLEEAWLNEKFAPELLESKSEVVECVMEQLNHMEQNLHRAKPGDLKISFHHMEIERIRYMLSSYLRSRMLKIEKFFPHILEKEKSRGEGEPPHLSPEEFAFAKEYMTNTETLLKSVALRHMPPNLQTVDLLKSVPKPNLDSFVFLRVKEEQNNILVEPETDEQSEYAIDMEVGSQHLIRYRTIAPLVASGAVKLI.

The protein belongs to the GINS4/SLD5 family. Component of the GINS complex which is a heterotetramer of gins1/psf1, gins2/psf2, gins3/psf3 and gins4/sld5. Component of the CMG helicase complex, composed of the mcm2-7 complex, the GINS complex and cdc45.

It localises to the nucleus. Its subcellular location is the chromosome. The protein localises to the cytoplasm. Functionally, required for initiation of chromosomal DNA replication. Core component of CDC45-MCM-GINS (CMG) helicase, the molecular machine that unwinds template DNA during replication, and around which the replisome is built. The polypeptide is DNA replication complex GINS protein SLD5 (Xenopus laevis (African clawed frog)).